The chain runs to 243 residues: UDP-2,3-diacylglucosamine hydrolase (243 aa).

Mn(2+) is bound by residues Asp9, His11, Asp42, Asn79, and His114. 79 to 80 (NR) lines the substrate pocket. 4 residues coordinate substrate: Asp122, Ser160, Asn164, and His195. Positions 195 and 197 each coordinate Mn(2+).

The protein belongs to the LpxH family. The cofactor is Mn(2+).

It localises to the cell inner membrane. The catalysed reaction is UDP-2-N,3-O-bis[(3R)-3-hydroxytetradecanoyl]-alpha-D-glucosamine + H2O = 2-N,3-O-bis[(3R)-3-hydroxytetradecanoyl]-alpha-D-glucosaminyl 1-phosphate + UMP + 2 H(+). It functions in the pathway glycolipid biosynthesis; lipid IV(A) biosynthesis; lipid IV(A) from (3R)-3-hydroxytetradecanoyl-[acyl-carrier-protein] and UDP-N-acetyl-alpha-D-glucosamine: step 4/6. In terms of biological role, hydrolyzes the pyrophosphate bond of UDP-2,3-diacylglucosamine to yield 2,3-diacylglucosamine 1-phosphate (lipid X) and UMP by catalyzing the attack of water at the alpha-P atom. Involved in the biosynthesis of lipid A, a phosphorylated glycolipid that anchors the lipopolysaccharide to the outer membrane of the cell. This chain is UDP-2,3-diacylglucosamine hydrolase, found in Coxiella burnetii (strain RSA 331 / Henzerling II).